We begin with the raw amino-acid sequence, 134 residues long: Ribulose bisphosphate carboxylase small subunit (134 aa).

It belongs to the RuBisCO small chain family. Heterohexadecamer of 8 large and 8 small subunits.

RuBisCO catalyzes two reactions: the carboxylation of D-ribulose 1,5-bisphosphate, the primary event in carbon dioxide fixation, as well as the oxidative fragmentation of the pentose substrate. Both reactions occur simultaneously and in competition at the same active site. Although the small subunit is not catalytic it is essential for maximal activity. The protein is Ribulose bisphosphate carboxylase small subunit of Bradyrhizobium diazoefficiens (strain JCM 10833 / BCRC 13528 / IAM 13628 / NBRC 14792 / USDA 110).